The following is a 190-amino-acid chain: MASRGKTETSKLKQNLEEQLDRLMQQLQDLEECREELDTDEYEETKKETLEQLSEFNDSLKKIMSGNMTLVDELSGMQLAIQAAISQAFKTPEVIRLFAKKQPGQLRTRLAEMDRDLMVGKLERDLYTQQKVEILTALRKLGEKLTADDEAFLSANAGAILSQFEKVSTDLGSGDKILALASFEVEKTKK.

Residues 2–63 adopt a coiled-coil conformation; that stretch reads ASRGKTETSK…SEFNDSLKKI (62 aa).

Belongs to the CTNNBIP1 family. In terms of assembly, does not interact with CTNNB1. Ubiquitously expressed, with highest levels in kidney. Up-regulated in several cases of gastric cancers.

The protein is Protein LZIC (LZIC) of Homo sapiens (Human).